The sequence spans 89 residues: UPF0250 protein CV_3095 (89 aa).

The protein belongs to the UPF0250 family.

The chain is UPF0250 protein CV_3095 from Chromobacterium violaceum (strain ATCC 12472 / DSM 30191 / JCM 1249 / CCUG 213 / NBRC 12614 / NCIMB 9131 / NCTC 9757 / MK).